A 381-amino-acid chain; its full sequence is E3 ubiquitin-protein ligase RNF34 (381 aa).

The FYVE-type zinc finger occupies 56-107 (EGPNIVCKACGLSFSVFRKKHVCCDCKKDFCSLCSVSQENLRRCSTCHLLQE). An SAP 1 domain is found at 115–134 (LMRLKVKDLRQYLLLRNVPT). Ser-169 bears the Phosphoserine mark. Residues 216–261 (LASANTDDEDGEEDDDDDDDDDDEDDDEQEENLEEQNPGLSKKKAR) form a disordered region. The span at 221–249 (TDDEDGEEDDDDDDDDDDEDDDEQEENLE) shows a compositional bias: acidic residues. Phosphoserine is present on residues Ser-263 and Ser-265. Residues 273–287 (VEGMSVRQLKEILAR) enclose the SAP 2 domain. An RING-type zinc finger spans residues 334-369 (CRICMDAVIDCVLLECGHMVTCTKCGKRMSECPICR).

As to quaternary structure, interacts with CASP8 and CASP10. Interacts with p53/TP53; involved in p53/TP53 ubiquitination. Interacts (via RING-type zinc finger) with MDM2; the interaction stabilizes MDM2. Interacts (via RING-type zinc finger) with PPARGC1A. Interacts with NOD1. Proteolytically cleaved by caspases upon induction of apoptosis by TNF. Post-translationally, autoubiquitinated (in vitro). Ubiquitous. Detected in brain, cerebellum, midbrain, hippocampus, striatum, heart, lung, kidney, muscle, spleen and testis.

The protein resides in the cell membrane. Its subcellular location is the endomembrane system. It is found in the nucleus. It localises to the nucleus speckle. The protein localises to the cytoplasm. The protein resides in the cytosol. The enzyme catalyses S-ubiquitinyl-[E2 ubiquitin-conjugating enzyme]-L-cysteine + [acceptor protein]-L-lysine = [E2 ubiquitin-conjugating enzyme]-L-cysteine + N(6)-ubiquitinyl-[acceptor protein]-L-lysine.. It functions in the pathway protein modification; protein ubiquitination. Functionally, E3 ubiquitin-protein ligase that regulates several biological processes through the ubiquitin-mediated proteasomal degradation of various target proteins. Ubiquitinates the caspases CASP8 and CASP10, promoting their proteasomal degradation, to negatively regulate cell death downstream of death domain receptors in the extrinsic pathway of apoptosis. May mediate 'Lys-48'-linked polyubiquitination of RIPK1 and its subsequent proteasomal degradation thereby indirectly regulating the tumor necrosis factor-mediated signaling pathway. Negatively regulates p53/TP53 through its direct ubiquitination and targeting to proteasomal degradation. Indirectly, may also negatively regulate p53/TP53 through ubiquitination and degradation of SFN. Mediates PPARGC1A proteasomal degradation probably through ubiquitination thereby indirectly regulating the metabolism of brown fat cells. Possibly involved in innate immunity, through 'Lys-48'-linked polyubiquitination of NOD1 and its subsequent proteasomal degradation. The chain is E3 ubiquitin-protein ligase RNF34 from Rattus norvegicus (Rat).